The following is a 290-amino-acid chain: 4-hydroxybenzoate octaprenyltransferase (290 aa).

The next 8 helical transmembrane spans lie at 40–60, 99–119, 120–140, 142–162, 165–185, 215–235, 239–259, and 267–287; these read IAGAGTPSLTVIVVFFLGVVI, LALFGGLGLLAFGLVLFLNEL, TFWLSFGGLGLAVLYPFTKRF, FMPQLFLGAAFSWAIPMAFAA, GEVPEIAWLLYVANVLWTVAY, LMIAILQALTLLALIMVGHRL, WPWYAGLVGMSLSFAFQHSLI, and SFHAFLNNHWAGACVFIGLYF.

This sequence belongs to the UbiA prenyltransferase family. The cofactor is Mg(2+).

Its subcellular location is the cell inner membrane. The enzyme catalyses all-trans-octaprenyl diphosphate + 4-hydroxybenzoate = 4-hydroxy-3-(all-trans-octaprenyl)benzoate + diphosphate. It functions in the pathway cofactor biosynthesis; ubiquinone biosynthesis. Functionally, catalyzes the prenylation of para-hydroxybenzoate (PHB) with an all-trans polyprenyl group. Mediates the second step in the final reaction sequence of ubiquinone-8 (UQ-8) biosynthesis, which is the condensation of the polyisoprenoid side chain with PHB, generating the first membrane-bound Q intermediate 3-octaprenyl-4-hydroxybenzoate. In Alcanivorax borkumensis (strain ATCC 700651 / DSM 11573 / NCIMB 13689 / SK2), this protein is 4-hydroxybenzoate octaprenyltransferase.